The primary structure comprises 299 residues: ATP phosphoribosyltransferase (299 aa).

The protein belongs to the ATP phosphoribosyltransferase family. Long subfamily. It depends on Mg(2+) as a cofactor.

Its subcellular location is the cytoplasm. It catalyses the reaction 1-(5-phospho-beta-D-ribosyl)-ATP + diphosphate = 5-phospho-alpha-D-ribose 1-diphosphate + ATP. It functions in the pathway amino-acid biosynthesis; L-histidine biosynthesis; L-histidine from 5-phospho-alpha-D-ribose 1-diphosphate: step 1/9. With respect to regulation, feedback inhibited by histidine. Its function is as follows. Catalyzes the condensation of ATP and 5-phosphoribose 1-diphosphate to form N'-(5'-phosphoribosyl)-ATP (PR-ATP). Has a crucial role in the pathway because the rate of histidine biosynthesis seems to be controlled primarily by regulation of HisG enzymatic activity. This is ATP phosphoribosyltransferase from Shewanella oneidensis (strain ATCC 700550 / JCM 31522 / CIP 106686 / LMG 19005 / NCIMB 14063 / MR-1).